The following is a 1326-amino-acid chain: F-box/WD repeat-containing protein 7 (1326 aa).

Disordered regions lie at residues 1–58 (MERG…AEVG), 123–187 (DSSS…IEDE), 318–351 (TVSN…ALSR), 399–549 (GSKA…SGCS), 615–642 (RSNP…RNGS), and 797–843 (TPRS…NPPP). Residues 9 to 39 (SSESVTSAGERTQSAVTSSTSTWVKSQASTS) are compositionally biased toward polar residues. The segment covering 165-187 (NDDDDDEEPEPEEDDEEELIEDE) has biased composition (acidic residues). A compositionally biased stretch (low complexity) spans 320–348 (SNPSPAASANAAAPEEASTSNSSSTSSSA). Over residues 403-464 (ANGSGTANSD…KLNLGSSLGA (62 aa)) the composition is skewed to polar residues. A compositionally biased stretch (low complexity) spans 465-486 (SSCSQHRSGSSSTSKSMESSTS). The span at 495-504 (VYTNTNSNDY) shows a compositional bias: polar residues. Composition is skewed to low complexity over residues 510–520 (TTSGSSTSGGS), 528–546 (NVSA…SQES), and 616–631 (SNPP…GANP). 2 stretches are compositionally biased toward polar residues: residues 632-642 (TASVRQRRNGS) and 797-824 (TPRS…STPG). T813 is subject to Phosphothreonine. A Phosphoserine modification is found at S825. Residues 889 to 935 (RDFISLLPRELALFVLSYLEPKDLLRAAQTCRSWRFLCDDNLLWKEK) form the F-box domain. WD repeat units lie at residues 992–1030 (GHDD…CLRT), 1033–1070 (GHTG…CVHT), 1073–1110 (GHTS…CLHV), 1113–1150 (GHLA…CLHT), 1153–1190 (GHTN…CKHT), 1193–1232 (GHQS…QTLS), and 1236–1273 (KHHS…FIRN).

Part of a SCF E3 ubiquitin-protein ligase complex. Interacts with Myc and puf. Interacts with CycE. In terms of tissue distribution, expressed in follicle cell epithelium and imaginal disks, particularly in the morphogenetic furrow.

It is found in the nucleus. It functions in the pathway protein modification; protein ubiquitination. In terms of biological role, substrate recognition component of a SCF (SKP1-CUL1-F-box protein) E3 ubiquitin-protein ligase complex which mediates the ubiquitination and subsequent proteasomal degradation of target proteins. Probably recognizes and binds to phosphorylated target proteins. In the wing and eye, negatively regulates cell growth and proliferation by mediating the degradation of Myc and cyclin E, respectively. Required for endocycles, but not mitosis in follicle cell epithelium. The sequence is that of F-box/WD repeat-containing protein 7 from Drosophila melanogaster (Fruit fly).